The following is a 268-amino-acid chain: MADS-box protein FBP24 (268 aa).

Residues 4 to 64 (MGRGKIEVKR…GKLFEYCSQP (61 aa)) enclose the MADS-box domain. A K-box domain is found at 88–178 (RVQLYDEVAK…YQWLMNNQMY (91 aa)). The disordered stretch occupies residues 243–268 (NSISPYRLQPSHPNLQDSHVHGPSYD).

It localises to the nucleus. Probable transcription factor. This is MADS-box protein FBP24 (FBP24) from Petunia hybrida (Petunia).